The following is an 89-amino-acid chain: Small ribosomal subunit protein uS19 (89 aa).

The protein belongs to the universal ribosomal protein uS19 family.

In terms of biological role, protein S19 forms a complex with S13 that binds strongly to the 16S ribosomal RNA. This Xanthomonas axonopodis pv. citri (strain 306) protein is Small ribosomal subunit protein uS19.